Here is a 202-residue protein sequence, read N- to C-terminus: UPF0316 protein SH1041 (202 aa).

The next 3 membrane-spanning stretches (helical) occupy residues 8–28, 40–60, and 66–86; these read PWSM…FLTM, MAAA…GMVM, and IQNI…GMKI.

This sequence belongs to the UPF0316 family.

The protein localises to the cell membrane. This Staphylococcus haemolyticus (strain JCSC1435) protein is UPF0316 protein SH1041.